Consider the following 303-residue polypeptide: MKKLFFLLLLLFLIYLGYDYVNEALFSQEKVEFQNYDQNPKEHLENSGTSENTQEKTITEEQVYQGNLLLINSKYPVRQESVKSDIVNLSKHDELINGYGLLDSNIYMSKEIAQKFSEMVNDAVKGGVSHFIINSGYRDFDEQSVLYQEMGAEYALPAGYSEHNSGLSLDVGSSLTKMERAPEGKWIEENAWKYGFILRYPEDKTELTGIQYEPWHIRYVGLPHSAIMKEKNFVLEEYMDYLKEEKTISVSVNGEKYEIFYYPVTKNTTIHVPTNLRYEISGNNIDGVIVTVFPGSTHTNSRR.

The helical transmembrane segment at 7-23 threads the bilayer; that stretch reads LLLLLFLIYLGYDYVNE. A disordered region spans residues 37–56; sequence DQNPKEHLENSGTSENTQEK. Substrate contacts are provided by residues 154 to 156 and S161; that span reads YAL. Zn(2+)-binding residues include H163 and D170. E213 (proton donor/acceptor) is an active-site residue. H216 is a binding site for Zn(2+).

This sequence belongs to the peptidase M15B family. It depends on Zn(2+) as a cofactor.

Its subcellular location is the cell membrane. Its activity is regulated as follows. The DD-carboxypeptidase activity is not inhibited by beta-lactam antibiotics. Functionally, cleaves the C-terminal D-alanine residue of UDP-muramyl-pentapeptide (UDP-MurNAc-L-Ala-D-Glu-mDAP-D-Ala-D-Ala) or diacetyl-L-Lys-D-Ala-D-Ala. However the physiological substrate likely contains L-Lys instead of mDAP at the third position of the pentapeptide. Also releases the C-terminal D-lactate from UDP-MurNAc-L-Ala-D-Glu-mDAP-D-Ala-D-lactate, a depsipeptide produced by the vancomycin resistance protein VanA. Therefore, VanY should contribute in vivo to the hydrolysis of both the D-alanyl-D-alanine- and the depsipeptide-containing peptidoglycan precursors. Is not necessary for vancomycin resistance of E.faecium BM4147 and perhaps not W14-9. Does not display transpeptidase or beta-lactamase activities. The polypeptide is D-alanyl-D-alanine carboxypeptidase (Enterococcus faecium (Streptococcus faecium)).